Here is a 128-residue protein sequence, read N- to C-terminus: SH2 domain-containing protein 1A (128 aa).

Positions 6-102 constitute an SH2 domain; the sequence is VYHGKISRET…GIVIPLQYPV (97 aa). Residues 67–92 are interaction with FYN SH3 domain; sequence ETAPGVHKRFFRKIKNLISAFQKPDQ. Lysine 89 carries the post-translational modification N6-acetyllysine. The tract at residues 104-128 is disordered; that stretch reads KKPSARSTQGATGRRDDPDVFLKTP. Residues 116–128 are compositionally biased toward basic and acidic residues; it reads GRRDDPDVFLKTP.

Interacts with CD84, CD244, LY9, SLAMF1 and FYN. Interacts with NTRK1, NTRK2 and NTRK3.

It is found in the cytoplasm. In terms of biological role, cytoplasmic adapter regulating receptors of the signaling lymphocytic activation molecule (SLAM) family such as SLAMF1, CD244, LY9, CD84, SLAMF6 and SLAMF7. In SLAM signaling seems to cooperate with SH2D1B/EAT-2. Initially it has been proposed that association with SLAMF1 prevents SLAMF1 binding to inhibitory effectors including INPP5D/SHIP1 and PTPN11/SHP-2. However, by simultaneous interactions, recruits FYN which subsequently phosphorylates and activates SLAMF1. Positively regulates CD244/2B4- and CD84-mediated natural killer (NK) cell functions. Can also promote CD48-, SLAMF6 -, LY9-, and SLAMF7-mediated NK cell activation. In the context of NK cell-mediated cytotoxicity enhances conjugate formation with target cells. May also regulate the activity of the neurotrophin receptors NTRK1, NTRK2 and NTRK3. The chain is SH2 domain-containing protein 1A (SH2D1A) from Bos taurus (Bovine).